Consider the following 177-residue polypeptide: MNYIPCMITIGNFICGLLAIHSLLYHNIHSAVLFIFTGMFLDFFDGMAARKLNAVSDMGRELDSFADLVTFGVAPSMLAYSVALYTLPFIGILCALTYSICGMLRLSKFNIEQSKLPTFIGMPIPFAGMCLVILSFTYNPILLAIGTCGLSYLMVSKIKFPHFKKHAAENLESGRWN.

5 helical membrane-spanning segments follow: residues 4–24 (IPCM…HSLL), 28–48 (IHSA…DGMA), 77–97 (MLAY…CALT), 116–136 (LPTF…ILSF), and 140–160 (PILL…KIKF).

Belongs to the CDP-alcohol phosphatidyltransferase class-I family.

The protein resides in the cell membrane. It catalyses the reaction a CDP-1,2-diacyl-sn-glycerol + L-serine = a 1,2-diacyl-sn-glycero-3-phospho-L-serine + CMP + H(+). This Bacillus subtilis (strain 168) protein is CDP-diacylglycerol--serine O-phosphatidyltransferase (pssA).